Consider the following 610-residue polypeptide: Atypical kinase COQ8, mitochondrial (610 aa).

The segment covering 98-111 (GVKHLQEQSSKEIK) has biased composition (basic and acidic residues). The segment at 98–144 (GVKHLQEQSSKEIKNPISQPILPNKKDEISPAKPSAIDSSIKDVTKS) is disordered.

Belongs to the protein kinase superfamily. ADCK protein kinase family.

It localises to the mitochondrion. It functions in the pathway cofactor biosynthesis; ubiquinone biosynthesis. Functionally, atypical kinase involved in the biosynthesis of coenzyme Q, also named ubiquinone, an essential lipid-soluble electron transporter for aerobic cellular respiration. Its substrate specificity is still unclear: may act as a protein kinase that mediates phosphorylation of coq3. According to other reports, acts as a small molecule kinase, possibly a lipid kinase that phosphorylates a prenyl lipid in the ubiquinone biosynthesis pathway, as suggested by its ability to bind coenzyme Q lipid intermediates. The chain is Atypical kinase COQ8, mitochondrial from Schizosaccharomyces pombe (strain 972 / ATCC 24843) (Fission yeast).